Here is a 588-residue protein sequence, read N- to C-terminus: Calcium/calmodulin-dependent protein kinase kinase 2 (588 aa).

Over residues 1-11 (MSSCVSSQPTS) the composition is skewed to polar residues. Disordered stretches follow at residues 1-34 (MSSC…KPCE) and 64-147 (DLNL…PTVE). Serine 2 bears the N-acetylserine mark. Phosphoserine is present on residues serine 99, serine 114, serine 129, serine 133, and serine 137. Residues 101–116 (QEPSQGGPASSSNSLD) show a composition bias toward polar residues. The segment covering 124 to 139 (PSLSYSPASSPQSSPR) has biased composition (low complexity). The Protein kinase domain maps to 165 to 446 (YTLKDEIGKG…VPEIKLHPWV (282 aa)). ATP-binding positions include 171–179 (IGKGSYGVV) and lysine 194. Residues 204–226 (QAGFPRRPPPRGARPAPGGCIQP) form an RP domain region. Positions 205-225 (AGFPRRPPPRGARPAPGGCIQ) are disordered. Aspartate 312 serves as the catalytic Proton acceptor. Residues 472–477 (ENSVKH) are autoinhibitory domain. The interval 475–500 (VKHIPSLATVILVKTMIRKRSFGNPF) is calmodulin-binding. A phosphoserine mark is found at serine 495, serine 511, threonine 522, and serine 572. The segment at 497-588 (GNPFEGSRRE…LQPEEVMEPE (92 aa)) is disordered. Residues 521-536 (PTREWEPLSEPKEARQ) show a composition bias toward basic and acidic residues. Positions 570 to 580 (PGSPPRMPPLQ) are enriched in pro residues.

This sequence belongs to the protein kinase superfamily. Ser/Thr protein kinase family. In terms of assembly, interacts with calmodulin. Autophosphorylated and phosphorylated by PKA. Each isoform may show a different pattern of phosphorylation. Expressed in all tissues tested. A differential expression pattern compared to CAMKK1 is observed in the brain.

The protein resides in the nucleus. The protein localises to the cytoplasm. It is found in the cell projection. It localises to the neuron projection. The catalysed reaction is L-seryl-[protein] + ATP = O-phospho-L-seryl-[protein] + ADP + H(+). It carries out the reaction L-threonyl-[protein] + ATP = O-phospho-L-threonyl-[protein] + ADP + H(+). With respect to regulation, activated by Ca(2+)/calmodulin. Binding of calmodulin may relieve intrasteric autoinhibition. Autophosphorylation does not alter activity or regulation by Ca(2+)/calmodulin. In part, activity is independent on Ca(2+)/calmodulin. Functionally, calcium/calmodulin-dependent protein kinase belonging to a proposed calcium-triggered signaling cascade involved in a number of cellular processes. Phosphorylates CAMK1, CAMK4 and CAMK1D. Efficiently phosphorylates 5'-AMP-activated protein kinase (AMPK) trimer, including that consisting of PRKAA1, PRKAB1 and PRKAG1. This phosphorylation is stimulated in response to Ca(2+) signals. May play a role in neurite growth. Isoform 2 may promote neurite elongation, while isoform 1 may promoter neurite branching. May be involved in hippocampal activation of CREB1. This is Calcium/calmodulin-dependent protein kinase kinase 2 (Camkk2) from Mus musculus (Mouse).